The chain runs to 282 residues: Elongation factor Ts (282 aa).

The interval T80–V83 is involved in Mg(2+) ion dislocation from EF-Tu.

It belongs to the EF-Ts family.

The protein localises to the cytoplasm. In terms of biological role, associates with the EF-Tu.GDP complex and induces the exchange of GDP to GTP. It remains bound to the aminoacyl-tRNA.EF-Tu.GTP complex up to the GTP hydrolysis stage on the ribosome. The sequence is that of Elongation factor Ts from Chlamydia felis (strain Fe/C-56) (Chlamydophila felis).